Reading from the N-terminus, the 229-residue chain is Deoxyribose-phosphate aldolase (229 aa).

The active-site Proton donor/acceptor is the Asp84. Catalysis depends on Lys146, which acts as the Schiff-base intermediate with acetaldehyde. The active-site Proton donor/acceptor is the Lys188.

The protein belongs to the DeoC/FbaB aldolase family. DeoC type 1 subfamily.

The protein localises to the cytoplasm. It catalyses the reaction 2-deoxy-D-ribose 5-phosphate = D-glyceraldehyde 3-phosphate + acetaldehyde. It participates in carbohydrate degradation; 2-deoxy-D-ribose 1-phosphate degradation; D-glyceraldehyde 3-phosphate and acetaldehyde from 2-deoxy-alpha-D-ribose 1-phosphate: step 2/2. Functionally, catalyzes a reversible aldol reaction between acetaldehyde and D-glyceraldehyde 3-phosphate to generate 2-deoxy-D-ribose 5-phosphate. This is Deoxyribose-phosphate aldolase from Pyrobaculum neutrophilum (strain DSM 2338 / JCM 9278 / NBRC 100436 / V24Sta) (Thermoproteus neutrophilus).